A 363-amino-acid chain; its full sequence is Trichocyst matrix protein T4-A (363 aa).

The signal sequence occupies residues 1 to 17; sequence MARSLTILAIVFAVATA. Residues 18-52 constitute a propeptide that is removed on maturation; the sequence is RVTKSESPKEILAQVNKDSFGNSILSVLQLQLATG. A coiled-coil region spans residues 85–119; the sequence is VAFEKIIADLEQEIAYHQTQIVALSNLRDSTTEAL. The propeptide occupies 190 to 221; that stretch reads RFEKVQAKLMESKHALFKPLINALTQLASKVD. Positions 244 to 352 form a coiled coil; it reads ASLLATEERQ…EVLTQKLSAA (109 aa).

Belongs to the TMP family. In terms of processing, two components are produced by post-translational processing from the precursor peptide.

It localises to the trichocyst. Functionally, structural protein that crystallize inside the trichocyst matrix. In Paramecium tetraurelia, this protein is Trichocyst matrix protein T4-A (T4A).